Here is a 168-residue protein sequence, read N- to C-terminus: Phosphopantetheine adenylyltransferase (168 aa).

Thr10 serves as a coordination point for substrate. ATP-binding positions include 10–11 (TF) and His18. Lys42, Leu75, and Arg89 together coordinate substrate. Residues 90-92 (GVR), Glu100, and 125-131 (YTYVASS) each bind ATP.

Belongs to the bacterial CoaD family. In terms of assembly, homohexamer. The cofactor is Mg(2+).

It localises to the cytoplasm. The catalysed reaction is (R)-4'-phosphopantetheine + ATP + H(+) = 3'-dephospho-CoA + diphosphate. The protein operates within cofactor biosynthesis; coenzyme A biosynthesis; CoA from (R)-pantothenate: step 4/5. In terms of biological role, reversibly transfers an adenylyl group from ATP to 4'-phosphopantetheine, yielding dephospho-CoA (dPCoA) and pyrophosphate. In Prosthecochloris aestuarii (strain DSM 271 / SK 413), this protein is Phosphopantetheine adenylyltransferase.